Consider the following 148-residue polypeptide: Macrodomain Ter protein (148 aa).

It belongs to the MatP family. As to quaternary structure, homodimer.

Its subcellular location is the cytoplasm. Required for spatial organization of the terminus region of the chromosome (Ter macrodomain) during the cell cycle. Prevents early segregation of duplicated Ter macrodomains during cell division. Binds specifically to matS, which is a 13 bp signature motif repeated within the Ter macrodomain. This chain is Macrodomain Ter protein, found in Haemophilus influenzae (strain PittGG).